The following is a 279-amino-acid chain: MLHHYYSGGAGHHQDVAAAGSPGDMASSTFSLFFPMSNGQCWPPSTVEESAAYDDHSTVTTSPSSPSSSSTGSVDCTLSLGTPSSRRAEPVAAAAPAANHGAPVPAHYPSLSAATVSWDATAESYYCGQQGRPATGAAKCAAGAGHDALLDRRCANCGTASTPLWRNGPRGPKSLCNACGIRYKKEERRAAATTTTADGAAGCGFITAQRGRGSTAAKAAPAVTTCGEETSPYVVGGGGGGGEVADAAYLAWRLNVVPPAATATAFSVWPERASLYHYN.

Residues 52-94 are disordered; that stretch reads AYDDHSTVTTSPSSPSSSSTGSVDCTLSLGTPSSRRAEPVAAA. Low complexity predominate over residues 58–74; sequence TVTTSPSSPSSSSTGSV. A GATA-type zinc finger spans residues 154–179; the sequence is CANCGTASTPLWRNGPRGPKSLCNAC.

It belongs to the type IV zinc-finger family. Class B subfamily. Highly expressed in inflorescences. Expressed in vascular bundles of root stele within the elongation zones, of elongating upper internodes and of the junctions of leaf blades and sheaths.

Its function is as follows. Probable transcription factor that regulates organogenesis during transition from the vegetative to the reproductive phase. Regulates the expression of CYP78A11/PLA1, HD3A and MADS1 during reproductive development in rice. May act upstream of CYP78A11/PLA1 during panicle development. Acts independently of the photoperiodic and gibberellin signaling pathways. The protein is GATA transcription factor 15 of Oryza sativa subsp. japonica (Rice).